The chain runs to 507 residues: Histidine ammonia-lyase (507 aa).

Positions A141–G143 form a cross-link, 5-imidazolinone (Ala-Gly). 2,3-didehydroalanine (Ser) is present on S142.

This sequence belongs to the PAL/histidase family. Post-translationally, contains an active site 4-methylidene-imidazol-5-one (MIO), which is formed autocatalytically by cyclization and dehydration of residues Ala-Ser-Gly.

It localises to the cytoplasm. The catalysed reaction is L-histidine = trans-urocanate + NH4(+). The protein operates within amino-acid degradation; L-histidine degradation into L-glutamate; N-formimidoyl-L-glutamate from L-histidine: step 1/3. This is Histidine ammonia-lyase from Cereibacter sphaeroides (strain ATCC 17023 / DSM 158 / JCM 6121 / CCUG 31486 / LMG 2827 / NBRC 12203 / NCIMB 8253 / ATH 2.4.1.) (Rhodobacter sphaeroides).